The primary structure comprises 453 residues: Validoxylamine A glucosyltransferase (453 aa).

It belongs to the glycosyltransferase 2 family. Requires Mn(2+) as cofactor.

It carries out the reaction validoxylamine A + UDP-alpha-D-glucose = validamycin A + UDP + H(+). In terms of biological role, involved in the biosynthesis of the antifungal agent validamycin A. Catalyzes the final attachment of glucose from UDP-alpha-D-glucose to validoxylamine A to yield validamycin A. The chain is Validoxylamine A glucosyltransferase from Streptomyces hygroscopicus subsp. limoneus.